Here is a 128-residue protein sequence, read N- to C-terminus: Lymphocyte antigen 6D (128 aa).

The first 20 residues, 1–20, serve as a signal peptide directing secretion; the sequence is MKTVLLFLVALAAAAGPAQA. In terms of domain architecture, UPAR/Ly6 spans 21 to 108; that stretch reads LRCHVCTSSS…WQSAAPARTS (88 aa). 5 disulfide bridges follow: Cys-23/Cys-45, Cys-26/Cys-32, Cys-38/Cys-63, Cys-67/Cys-86, and Cys-87/Cys-92. Ser-98 carries the GPI-anchor amidated serine lipid modification. A propeptide spans 99–128 (removed in mature form); the sequence is WQSAAPARTSAHLGLALACGLLALLWAPGL.

The protein localises to the cell membrane. Its function is as follows. May act as a specification marker at earliest stage specification of lymphocytes between B- and T-cell development. Marks the earliest stage of B-cell specification. The chain is Lymphocyte antigen 6D (LY6D) from Bos taurus (Bovine).